Reading from the N-terminus, the 246-residue chain is Dehydration-responsive element-binding protein 1H (246 aa).

The disordered stretch occupies residues 1-43; it reads MDMAGHEVNSSSSSSGAESSSSSSGRQQYKKRPAGRTKFRETR. A compositionally biased stretch (low complexity) spans 10–24; it reads SSSSSSGAESSSSSS. The segment covering 28–37 has biased composition (basic residues); it reads QYKKRPAGRT. Residues 46 to 110 constitute a DNA-binding region (AP2/ERF); the sequence is VYRGVRRRGG…GGGAACLNFQ (65 aa). The disordered stretch occupies residues 155–187; that stretch reads AMDEATSGVSAPPPLANNAGSSETPGPSSIDGT. Residues 172–181 are compositionally biased toward polar residues; that stretch reads NAGSSETPGP.

This sequence belongs to the AP2/ERF transcription factor family. ERF subfamily.

Its subcellular location is the nucleus. Functionally, transcriptional activator that binds specifically to the DNA sequence 5'-[AG]CCGAC-3'. Binding to the C-repeat/DRE element mediates high salinity- and dehydration-inducible transcription. The chain is Dehydration-responsive element-binding protein 1H (DREB1H) from Oryza sativa subsp. indica (Rice).